The sequence spans 108 residues: UPF0102 protein SO_0299 (108 aa).

This sequence belongs to the UPF0102 family.

The chain is UPF0102 protein SO_0299 from Shewanella oneidensis (strain ATCC 700550 / JCM 31522 / CIP 106686 / LMG 19005 / NCIMB 14063 / MR-1).